Reading from the N-terminus, the 636-residue chain is LEAF RUST 10 DISEASE-RESISTANCE LOCUS RECEPTOR-LIKE PROTEIN KINASE-like 1.5 (636 aa).

Positions Met-1 to Ala-26 are cleaved as a signal peptide. Residues Ser-27–Val-257 are Extracellular-facing. Asn-73, Asn-102, Asn-146, and Asn-224 each carry an N-linked (GlcNAc...) asparagine glycan. A helical transmembrane segment spans residues Leu-258–Phe-278. Residues Arg-279–Asn-636 lie on the Cytoplasmic side of the membrane. A Protein kinase domain is found at Phe-324–Val-628. Residues Ile-330–Val-338 and Lys-352 contribute to the ATP site. The Proton acceptor role is filled by Asp-458.

This sequence belongs to the protein kinase superfamily. Ser/Thr protein kinase family.

The protein localises to the cell membrane. It catalyses the reaction L-seryl-[protein] + ATP = O-phospho-L-seryl-[protein] + ADP + H(+). It carries out the reaction L-threonyl-[protein] + ATP = O-phospho-L-threonyl-[protein] + ADP + H(+). This Arabidopsis thaliana (Mouse-ear cress) protein is LEAF RUST 10 DISEASE-RESISTANCE LOCUS RECEPTOR-LIKE PROTEIN KINASE-like 1.5.